The sequence spans 304 residues: N-acetyl-D-glucosamine kinase (304 aa).

ATP is bound by residues 4–11 (GFDMGGTK) and 133–140 (GLGGGLVI). Zn(2+) is bound by residues His157, Cys177, Cys179, and Cys184.

It belongs to the ROK (NagC/XylR) family. NagK subfamily.

The enzyme catalyses N-acetyl-D-glucosamine + ATP = N-acetyl-D-glucosamine 6-phosphate + ADP + H(+). The protein operates within cell wall biogenesis; peptidoglycan recycling. Its function is as follows. Catalyzes the phosphorylation of N-acetyl-D-glucosamine (GlcNAc) derived from cell-wall degradation, yielding GlcNAc-6-P. The sequence is that of N-acetyl-D-glucosamine kinase from Pectobacterium atrosepticum (strain SCRI 1043 / ATCC BAA-672) (Erwinia carotovora subsp. atroseptica).